Consider the following 422-residue polypeptide: L-threonine dehydratase biosynthetic IlvA (422 aa).

The residue at position 56 (K56) is an N6-(pyridoxal phosphate)lysine. Pyridoxal 5'-phosphate is bound by residues N83, 189–193 (GGGGL), and S315. The 75-residue stretch at 339-413 (HYFILNFPQR…FDPSNIYINE (75 aa)) folds into the ACT-like domain.

Belongs to the serine/threonine dehydratase family. As to quaternary structure, homotetramer. The cofactor is pyridoxal 5'-phosphate.

The enzyme catalyses L-threonine = 2-oxobutanoate + NH4(+). It functions in the pathway amino-acid biosynthesis; L-isoleucine biosynthesis; 2-oxobutanoate from L-threonine: step 1/1. Functionally, catalyzes the anaerobic formation of alpha-ketobutyrate and ammonia from threonine in a two-step reaction. The first step involved a dehydration of threonine and a production of enamine intermediates (aminocrotonate), which tautomerizes to its imine form (iminobutyrate). Both intermediates are unstable and short-lived. The second step is the nonenzymatic hydrolysis of the enamine/imine intermediates to form 2-ketobutyrate and free ammonia. In the low water environment of the cell, the second step is accelerated by RidA. The protein is L-threonine dehydratase biosynthetic IlvA (ilvA) of Staphylococcus aureus (strain bovine RF122 / ET3-1).